Here is a 718-residue protein sequence, read N- to C-terminus: Manganese-exporting P-type ATPase (718 aa).

The region spanning 11–78 (GRMRVKVDWV…AIKGAAHVAA (68 aa)) is the HMA domain. Transmembrane regions (helical) follow at residues 87 to 105 (HSAE…GGVA), 128 to 146 (TVAT…RGAL), 154 to 168 (AGTD…VASL), 177 to 191 (LTVL…YLQD), 327 to 351 (VGEN…LITG), and 357 to 375 (MTML…TPTA). D408 serves as the catalytic 4-aspartylphosphate intermediate. Residues D408, T410, and D610 each coordinate Mg(2+). The next 2 membrane-spanning stretches (helical) occupy residues 661–680 (AVDV…AAGL) and 690–709 (PVLA…ANSS).

It belongs to the cation transport ATPase (P-type) (TC 3.A.3) family. Type IB subfamily.

The protein localises to the cell membrane. The catalysed reaction is Mn(2+)(in) + ATP + H2O = Mn(2+)(out) + ADP + phosphate + H(+). Functionally, high affinity, slow turnover Mn(2+) transporting ATPase. This is Manganese-exporting P-type ATPase (ctpC) from Mycobacterium bovis (strain ATCC BAA-935 / AF2122/97).